The sequence spans 300 residues: GGSSRHEKSLGLLTTKFVSLLQEAQDGVLDLKAAADTLAVRQKRRIYDITNVLEGIDLIEKKSKNSIQWKGVGAGCNTKEVIDRLRCLKAEIEDLELKERELDQQKLWLQQSIKNVMEDSINNRFSYVTHEDICSCFNGDTLLAIQAPSGTQLEVPIPEMGQNGQKKYQINLKSHSGPIHVLLINKESNSSKPVVFPVPPPDDLTQPSSQSSTSVTPPKSTMAAQNLPEQHVSERSQNFQQTPATEISSGSISGDIIDELMSSDVFPLLRLSPTPADDYNFNLDDNEGVCDLFDVQILNY.

A DNA-binding region spans residues 2-73 (GSSRHEKSLG…KNSIQWKGVG (72 aa)). Positions 31-53 (LKAAADTLAVRQKRRIYDITNVL) are leucine-zipper. Residues 36 to 73 (DTLAVRQKRRIYDITNVLEGIDLIEKKSKNSIQWKGVG) carry the DEF box motif. The interval 74-170 (AGCNTKEVID…GQNGQKKYQI (97 aa)) is dimerization. Positions 191–250 (SKPVVFPVPPPDDLTQPSSQSSTSVTPPKSTMAAQNLPEQHVSERSQNFQQTPATEISSG) are disordered. The span at 203 to 221 (DLTQPSSQSSTSVTPPKST) shows a compositional bias: low complexity. Residues 235-246 (RSQNFQQTPATE) are compositionally biased toward polar residues. The segment at 242–300 (TPATEISSGSISGDIIDELMSSDVFPLLRLSPTPADDYNFNLDDNEGVCDLFDVQILNY) is transactivation. The segment at 277–294 (DDYNFNLDDNEGVCDLFD) is RBL2 association.

The protein belongs to the E2F/DP family. As to quaternary structure, component of the DRTF1/E2F transcription factor complex. Binds cooperatively with DP-1 to E2F sites. Interaction with retinoblastoma protein RB1 or proteins RBL1 and RBL2 inhibits the E2F transactivation domain. Component of the DREAM complex (also named LINC complex) at least composed of E2F4, E2F5, LIN9, LIN37, LIN52, LIN54, MYBL1, MYBL2, RBL1, RBL2, RBBP4, TFDP1 and TFDP2. The complex exists in quiescent cells where it represses cell cycle-dependent genes. It dissociates in S phase when LIN9, LIN37, LIN52 and LIN54 form a subcomplex that binds to MYBL2. In terms of tissue distribution, found in placenta followed by kidney, lung and brain.

Its subcellular location is the nucleus. Its function is as follows. Transcriptional activator that binds to E2F sites, these sites are present in the promoter of many genes whose products are involved in cell proliferation. May mediate growth factor-initiated signal transduction. It is likely involved in the early responses of resting cells to growth factor stimulation. Specifically required for multiciliate cell differentiation: together with MCIDAS and E2F5, binds and activate genes required for centriole biogenesis. The polypeptide is Transcription factor E2F5 (E2f5) (Rattus norvegicus (Rat)).